The primary structure comprises 559 residues: Formate--tetrahydrofolate ligase (559 aa).

Position 68 to 75 (68 to 75 (TPAGEGKT)) interacts with ATP.

The protein belongs to the formate--tetrahydrofolate ligase family.

It catalyses the reaction (6S)-5,6,7,8-tetrahydrofolate + formate + ATP = (6R)-10-formyltetrahydrofolate + ADP + phosphate. The protein operates within one-carbon metabolism; tetrahydrofolate interconversion. This chain is Formate--tetrahydrofolate ligase, found in Moorella thermoacetica (strain ATCC 39073 / JCM 9320).